A 606-amino-acid chain; its full sequence is MQKSLLAIAMASLLTPVSYLHAQEVQTNDTVVVTANRFEQPLAEVIASTTVISKQEIEETQAKSLLDVLKRVPGIEVSQSGGRGHSASVFIRGFNSNQVLFLVDGVRINSAAGGISFNHIPVGIIERVEVIKGPGGALYGSDAIAGVINVITTSSESSEGSVVSLGAGSDAQKEANFSTTRAFANGGVLKLAGGFEETEGFDIKDPETGLNYGYESQNLFASYSQAFNDEFSGSASVRWYDSLTEYDSGGKNYGYSENLSITADVQYSGSRLSSTLRANQQAIENLDYSQAEGKDNAGTVKKIALTNLQFLNQYLISEGITIGAGADWRKEKLDDDALSYGYPDKLAGESRSTTGVYLSTDLQLGDLQVTGSVRNDKHDTYDNYRTWSLGTRYQITESHSVRATFGTSFKAPSYSDLTNNPDLKPEEAMSREIGYTGEFALFTVDVAAYDNDVDNLIIWYEGSPWWYPENVDATLKGLEITGYFNTWFVHHTVVAEFKDHQDSGGNKLAKRADENYKWLMDASYENFDVNLTYTYTGERLGNPKEVSDPKNELPSVSLWDASVGYWISPDLVVRARVDNLTNEKYQTTLSYNAPERRYFANLTYQF.

The N-terminal stretch at 1–22 (MQKSLLAIAMASLLTPVSYLHA) is a signal peptide. The TonB box motif lies at 29-36 (DTVVVTAN). One can recognise a TBDR plug domain in the interval 41–153 (PLAEVIASTT…IAGVINVITT (113 aa)). A TBDR beta-barrel domain is found at 158–606 (SEGSVVSLGA…RYFANLTYQF (449 aa)). The TonB C-terminal box motif lies at 589–606 (LSYNAPERRYFANLTYQF).

Belongs to the TonB-dependent receptor family. BtuB (TC 1.B.14.3.1) subfamily.

The protein localises to the cell outer membrane. Involved in the active translocation of vitamin B12 (cyanocobalamin) across the outer membrane to the periplasmic space. It derives its energy for transport by interacting with the trans-periplasmic membrane protein TonB. This Vibrio vulnificus (strain CMCP6) protein is Vitamin B12 transporter BtuB.